We begin with the raw amino-acid sequence, 720 residues long: Fatty acid CoA ligase Acsl3 (720 aa).

The helical; Signal-anchor for type III membrane protein transmembrane segment at 21–41 threads the bilayer; the sequence is ILLYFIHFIISLYTILTYIPF. Topologically, residues 42–720 are cytoplasmic; sequence YFLCESKQEK…ADIERMYGRK (679 aa). Position 683 is a phosphoserine (serine 683).

The protein belongs to the ATP-dependent AMP-binding enzyme family. Requires Mg(2+) as cofactor.

Its subcellular location is the mitochondrion outer membrane. The protein resides in the peroxisome membrane. It is found in the microsome membrane. It localises to the endoplasmic reticulum membrane. It catalyses the reaction a long-chain fatty acid + ATP + CoA = a long-chain fatty acyl-CoA + AMP + diphosphate. It carries out the reaction (E)-hexadec-2-enoate + ATP + CoA = (2E)-hexadecenoyl-CoA + AMP + diphosphate. The enzyme catalyses (5Z,8Z,11Z,14Z)-eicosatetraenoate + ATP + CoA = (5Z,8Z,11Z,14Z)-eicosatetraenoyl-CoA + AMP + diphosphate. The catalysed reaction is 15-hydroxy-(5Z,8Z,11Z,13E)-eicosatetraenoate + ATP + CoA = 15-hydroxy-(5Z,8Z,11Z,13E)-eicosatetraenoyl-CoA + AMP + diphosphate. It catalyses the reaction 12-hydroxy-(5Z,8Z,10E,14Z)-eicosatetraenoate + ATP + CoA = 12-hydroxy-(5Z,8Z,10E,14Z)-eicosatetraenoyl-CoA + AMP + diphosphate. It carries out the reaction 5-hydroxy-(6E,8Z,11Z,14Z)-eicosatetraenoate + ATP + CoA = 5-hydroxy-(6E,8Z,11Z,14Z)-eicosatetraenoyl-CoA + AMP + diphosphate. The enzyme catalyses 14,15-epoxy-(5Z,8Z,11Z)-eicosatrienoate + ATP + CoA = 14,15-epoxy-(5Z,8Z,11Z)-eicosatrienoyl-CoA + AMP + diphosphate. The catalysed reaction is 11,12-epoxy-(5Z,8Z,14Z)-eicosatrienoate + ATP + CoA = 11,12-epoxy-(5Z,8Z,14Z)-eicosatrienoyl-CoA + AMP + diphosphate. It catalyses the reaction a medium-chain fatty acid + ATP + CoA = a medium-chain fatty acyl-CoA + AMP + diphosphate. It carries out the reaction hexadecanoate + ATP + CoA = hexadecanoyl-CoA + AMP + diphosphate. The enzyme catalyses tetradecanoate + ATP + CoA = tetradecanoyl-CoA + AMP + diphosphate. The catalysed reaction is dodecanoate + ATP + CoA = dodecanoyl-CoA + AMP + diphosphate. It catalyses the reaction octadecanoate + ATP + CoA = octadecanoyl-CoA + AMP + diphosphate. It carries out the reaction eicosanoate + ATP + CoA = eicosanoyl-CoA + AMP + diphosphate. The enzyme catalyses (9Z)-octadecenoate + ATP + CoA = (9Z)-octadecenoyl-CoA + AMP + diphosphate. The catalysed reaction is (9Z)-hexadecenoate + ATP + CoA = (9Z)-hexadecenoyl-CoA + AMP + diphosphate. It catalyses the reaction (9Z,12Z)-octadecadienoate + ATP + CoA = (9Z,12Z)-octadecadienoyl-CoA + AMP + diphosphate. It carries out the reaction (9Z,12Z,15Z)-octadecatrienoate + ATP + CoA = (9Z,12Z,15Z)-octadecatrienoyl-CoA + AMP + diphosphate. The enzyme catalyses (4Z,7Z,10Z,13Z,16Z,19Z)-docosahexaenoate + ATP + CoA = (4Z,7Z,10Z,13Z,16Z,19Z)-docosahexaenoyl-CoA + AMP + diphosphate. The catalysed reaction is (5Z,8Z,11Z,14Z,17Z)-eicosapentaenoate + ATP + CoA = (5Z,8Z,11Z,14Z,17Z)-eicosapentaenoyl-CoA + AMP + diphosphate. It catalyses the reaction a fatty acid + ATP + CoA = a fatty acyl-CoA + AMP + diphosphate. Acyl-CoA synthetases (ACSL) activates long-chain fatty acids for both synthesis of cellular lipids, and degradation via beta-oxidation. ACSL3 is required for the incorporation of fatty acids into phosphatidylcholine, the major phospholipid located on the surface of VLDL (very low density lipoproteins). Has mainly an anabolic role in energy metabolism. Mediates hepatic lipogenesis. Preferentially uses myristate, laurate, arachidonate and eicosapentaenoate as substrates. Both isoforms exhibit the same level of activity. The polypeptide is Fatty acid CoA ligase Acsl3 (Mus musculus (Mouse)).